The sequence spans 258 residues: Imidazole glycerol phosphate synthase subunit HisF (258 aa).

Active-site residues include Asp11 and Asp130.

This sequence belongs to the HisA/HisF family. As to quaternary structure, heterodimer of HisH and HisF.

Its subcellular location is the cytoplasm. The enzyme catalyses 5-[(5-phospho-1-deoxy-D-ribulos-1-ylimino)methylamino]-1-(5-phospho-beta-D-ribosyl)imidazole-4-carboxamide + L-glutamine = D-erythro-1-(imidazol-4-yl)glycerol 3-phosphate + 5-amino-1-(5-phospho-beta-D-ribosyl)imidazole-4-carboxamide + L-glutamate + H(+). It participates in amino-acid biosynthesis; L-histidine biosynthesis; L-histidine from 5-phospho-alpha-D-ribose 1-diphosphate: step 5/9. In terms of biological role, IGPS catalyzes the conversion of PRFAR and glutamine to IGP, AICAR and glutamate. The HisF subunit catalyzes the cyclization activity that produces IGP and AICAR from PRFAR using the ammonia provided by the HisH subunit. The sequence is that of Imidazole glycerol phosphate synthase subunit HisF from Salmonella arizonae (strain ATCC BAA-731 / CDC346-86 / RSK2980).